We begin with the raw amino-acid sequence, 256 residues long: Protein CC2D2B homolog (256 aa).

The interval 1-24 (MSEEMDNVTAEEITDKHLQKDLDA) is disordered. Over residues 13 to 22 (ITDKHLQKDL) the composition is skewed to basic and acidic residues. 2 coiled-coil regions span residues 136-159 (DLLKVKAADYEDDQEQIKKQKANI) and 194-214 (EIYKKTCNKMENRLLKLEEGK).

The protein is Protein CC2D2B homolog of Macaca fascicularis (Crab-eating macaque).